Consider the following 1167-residue polypeptide: Nucleolar protein 8 (1167 aa).

The 82-residue stretch at 8 to 89 folds into the RRM domain; sequence KRLYVGGLSQ…GTLQIQLAKE (82 aa). The segment at 223–304 is disordered; that stretch reads VQKDESSTGS…NSISDDDTDS (82 aa). Lys-225 participates in a covalent cross-link: Glycyl lysine isopeptide (Lys-Gly) (interchain with G-Cter in SUMO2). Over residues 248–275 the composition is skewed to polar residues; the sequence is LTQQQAAQKRTCDSITPSKSSPVPVSDT. Phosphoserine occurs at positions 268 and 298. The residue at position 302 (Thr-302) is a Phosphothreonine. Phosphoserine is present on Ser-304. A Glycyl lysine isopeptide (Lys-Gly) (interchain with G-Cter in SUMO2) cross-link involves residue Lys-314. 2 positions are modified to phosphoserine: Ser-331 and Ser-365. Position 376 is a phosphotyrosine (Tyr-376). Ser-378 carries the post-translational modification Phosphoserine. Thr-381 carries the phosphothreonine modification. At Ser-432 the chain carries Phosphoserine. Disordered regions lie at residues 435–470, 499–533, 590–908, 932–982, and 1006–1026; these read ESALSHGLKSLNRKSPSHSSSSEDADSASELADSEG, LKVPNEDTKSDGPETTTQCKFDRGSKSPKTPTGLR, KDSV…EEEL, NRGS…AEKL, and YTSEKEEGTPWNEDCGKEKPE. The segment covering 457–470 has biased composition (acidic residues); the sequence is EDADSASELADSEG. The span at 501-510 shows a compositional bias: basic and acidic residues; sequence VPNEDTKSDG. A compositionally biased stretch (polar residues) spans 640-652; the sequence is NYIQPQKRQTTFE. Residues 653 to 668 are compositionally biased toward basic and acidic residues; sequence SQDRKAVSPSSSEKRS. Phosphoserine is present on Ser-723. A compositionally biased stretch (basic and acidic residues) spans 727–736; that stretch reads SSKDTREIKT. The span at 738–748 shows a compositional bias: polar residues; that stretch reads FSLSISNSSDV. The span at 749–776 shows a compositional bias: basic and acidic residues; sequence SAKDKHAEDNEKRLAALEARQKAKEVQK. Residues 753–779 adopt a coiled-coil conformation; that stretch reads KHAEDNEKRLAALEARQKAKEVQKKLV. The residue at position 795 (Thr-795) is a Phosphothreonine. Ser-801 carries the post-translational modification Phosphoserine. The span at 817–827 shows a compositional bias: basic and acidic residues; sequence HPGEEWVKESM. Phosphoserine is present on residues Ser-837, Ser-838, Ser-843, and Ser-845. Over residues 837 to 847 the composition is skewed to acidic residues; it reads SSDDDESDSED. Positions 874-887 are enriched in basic and acidic residues; it reads GTDDRFRMDSRFLE. Residues 886–924 are a coiled coil; sequence LETDSEEEQEEVNEKKTAEEEELAEEKKKALNVVQSVLQ. Thr-888 bears the Phosphothreonine mark. Residue Ser-890 is modified to Phosphoserine. 2 stretches are compositionally biased toward basic and acidic residues: residues 940-968 and 1007-1026; these read KFKDIIHYDPTKQDHATYERKRDDKPKES and TSEKEEGTPWNEDCGKEKPE. Ser-1036 is modified (phosphoserine). Lys-1057 is covalently cross-linked (Glycyl lysine isopeptide (Lys-Gly) (interchain with G-Cter in SUMO2)). Disordered stretches follow at residues 1071-1105 and 1145-1167; these read IVWQEDPRLQDSSSEEEDVTEETDHRNSSPGEASL and RTTNLRMDCRKKHKDAKRKMKPK. Phosphoserine is present on residues Ser-1082, Ser-1083, Ser-1084, and Ser-1099. Basic residues predominate over residues 1153-1167; that stretch reads CRKKHKDAKRKMKPK.

In terms of assembly, interacts with the GTP form of RRAGA, RRAGC and RRAGD. Interacts with NIP7. Interacts with DDX18; the interaction is RNA-dependent. Interacts with DDX47; the interaction is RNA-dependent. In terms of processing, phosphorylated. Expressed in various diffuse-type gastric cancers. Detected at lower levels in skeletal muscle.

The protein localises to the nucleus. It localises to the nucleolus. In terms of biological role, plays an essential role in the survival of diffuse-type gastric cancer cells. Acts as a nucleolar anchoring protein for DDX47. May be involved in regulation of gene expression at the post-transcriptional level or in ribosome biogenesis in cancer cells. This chain is Nucleolar protein 8, found in Homo sapiens (Human).